We begin with the raw amino-acid sequence, 347 residues long: Quinolinate synthase (347 aa).

Residues histidine 47 and serine 68 each contribute to the iminosuccinate site. Residue cysteine 113 participates in [4Fe-4S] cluster binding. Iminosuccinate-binding positions include 139-141 (YAN) and serine 156. Cysteine 200 is a binding site for [4Fe-4S] cluster. Residues 226-228 (HPE) and threonine 243 each bind iminosuccinate. Cysteine 297 lines the [4Fe-4S] cluster pocket.

The protein belongs to the quinolinate synthase family. Type 1 subfamily. [4Fe-4S] cluster serves as cofactor.

The protein localises to the cytoplasm. It catalyses the reaction iminosuccinate + dihydroxyacetone phosphate = quinolinate + phosphate + 2 H2O + H(+). The protein operates within cofactor biosynthesis; NAD(+) biosynthesis; quinolinate from iminoaspartate: step 1/1. In terms of biological role, catalyzes the condensation of iminoaspartate with dihydroxyacetone phosphate to form quinolinate. The polypeptide is Quinolinate synthase (Enterobacter sp. (strain 638)).